The following is a 169-amino-acid chain: Cell division inhibitor SulA (169 aa).

Residues 106 to 112 form a ftsZ binding region; sequence ALRTGNY. Residues 162-169 form a lon protease binding region; the sequence is KIHSNLYH.

The protein belongs to the SulA family. Interacts with FtsZ. In terms of processing, is rapidly cleaved and degraded by the Lon protease once DNA damage is repaired.

Functionally, component of the SOS system and an inhibitor of cell division. Accumulation of SulA causes rapid cessation of cell division and the appearance of long, non-septate filaments. In the presence of GTP, binds a polymerization-competent form of FtsZ in a 1:1 ratio, thus inhibiting FtsZ polymerization and therefore preventing it from participating in the assembly of the Z ring. This mechanism prevents the premature segregation of damaged DNA to daughter cells during cell division. The chain is Cell division inhibitor SulA from Escherichia fergusonii (strain ATCC 35469 / DSM 13698 / CCUG 18766 / IAM 14443 / JCM 21226 / LMG 7866 / NBRC 102419 / NCTC 12128 / CDC 0568-73).